Reading from the N-terminus, the 153-residue chain is Heavy metal-associated isoprenylated plant protein 25 (153 aa).

In terms of domain architecture, HMA spans 24–88; sequence LQTVDVRVLI…IIHRTGKRAE (65 aa). Cysteine 35 and cysteine 38 together coordinate a metal cation. Cysteine 150 carries the post-translational modification Cysteine methyl ester. A lipid anchor (S-farnesyl cysteine) is attached at cysteine 150. Residues 151–153 constitute a propeptide, removed in mature form; the sequence is VVM.

The protein belongs to the HIPP family. In terms of tissue distribution, expressed in roots, shoot apical meristem, trichomes and flower buds.

It localises to the membrane. Heavy-metal-binding protein. Binds cadmium. May be involved in cadmium transport and play a role in cadmium detoxification. The sequence is that of Heavy metal-associated isoprenylated plant protein 25 from Arabidopsis thaliana (Mouse-ear cress).